The primary structure comprises 260 residues: Snake venom serine protease serpentokallikrein-1 (260 aa).

The N-terminal stretch at 1–18 is a signal peptide; the sequence is MVLIRVLANLLILQLSYA. Positions 19 to 24 are excised as a propeptide; that stretch reads QRTSEL. Residues 25 to 251 enclose the Peptidase S1 domain; sequence VIGGDECNIN…HLDWIKSIIA (227 aa). 6 disulfide bridges follow: cysteine 31/cysteine 165, cysteine 52/cysteine 68, cysteine 102/cysteine 258, cysteine 144/cysteine 212, cysteine 176/cysteine 191, and cysteine 202/cysteine 227. Histidine 67 functions as the Charge relay system in the catalytic mechanism. 2 N-linked (GlcNAc...) asparagine glycosylation sites follow: asparagine 81 and asparagine 105. Aspartate 112 acts as the Charge relay system in catalysis. Residues asparagine 156 and asparagine 172 are each glycosylated (N-linked (GlcNAc...) asparagine). Serine 206 serves as the catalytic Charge relay system.

Belongs to the peptidase S1 family. Snake venom subfamily. In terms of assembly, monomer. In terms of tissue distribution, expressed by the venom gland.

The protein resides in the secreted. In terms of biological role, snake venom serine protease that may act in the hemostasis system of the prey. This is Snake venom serine protease serpentokallikrein-1 from Protobothrops mucrosquamatus (Taiwan habu).